Reading from the N-terminus, the 252-residue chain is MSRTPIIAGNWKLNMNPKETVEFVNAVKDQLPDPSKVESVICAPAVDLDALLKAAEGSNLHVGAENCYWENSGAFTGETSPAVLKEMGVQYVIIGHSERRDYFHETDEDINKKAKAIFANGLTPILCCGESLEIREAGKEKEWVVSQIKADLEGLTSEQVSKLVIAYEPIWAIGTGKTASSDQAEEMCKTIRETVKDLYNEETAENVRIQYGGSVKPANIKELMAKPNIDGGLVGGASLVPDSYLALVNYQD.

A substrate-binding site is contributed by 10 to 12 (NWK). Histidine 96 (electrophile) is an active-site residue. Glutamate 168 (proton acceptor) is an active-site residue. Residues glycine 174, serine 214, and 235 to 236 (GG) each bind substrate.

Belongs to the triosephosphate isomerase family. In terms of assembly, homodimer.

Its subcellular location is the cytoplasm. The catalysed reaction is D-glyceraldehyde 3-phosphate = dihydroxyacetone phosphate. The protein operates within carbohydrate biosynthesis; gluconeogenesis. It participates in carbohydrate degradation; glycolysis; D-glyceraldehyde 3-phosphate from glycerone phosphate: step 1/1. In terms of biological role, seems to be capable of enhancing bacteriocin synthesis. Its function is as follows. Involved in the gluconeogenesis. Catalyzes stereospecifically the conversion of dihydroxyacetone phosphate (DHAP) to D-glyceraldehyde-3-phosphate (G3P). The protein is Triosephosphate isomerase of Lactobacillus delbrueckii subsp. lactis.